Consider the following 138-residue polypeptide: Glia maturation factor (138 aa).

The ADF-H domain maps to 3–138; it reads DNQICDISNE…TEEWLKAKLK (136 aa).

Belongs to the actin-binding proteins ADF family. GMF subfamily. As to expression, in ovaries, expressed in follicular epithelium, in polar cells, migrating border cells, and centripedal cells (at protein level).

It is found in the cell projection. The protein localises to the lamellipodium. The protein resides in the cytoplasm. It localises to the perinuclear region. Its subcellular location is the nucleus. It is found in the cell cortex. Its function is as follows. Inhibits Arp2/3-mediated actin nucleation. Together with flr, promotes Arp2/3-nucleated actin filament array disassembly. Promotes debranching. Regulates lamellipodial protrusion dynamics possibly by facilitating lamellipodial retraction. In egg chambers, enhances the retraction dynamics of cellular extensions in border cells and thus together with flr plays an important role in directional migration of border cell clusters. This chain is Glia maturation factor, found in Drosophila melanogaster (Fruit fly).